A 352-amino-acid chain; its full sequence is C-glycoside deglycosidase alpha subunit (352 aa).

Glu147 lines the Mn(2+) pocket. Residue His149 is the Proton acceptor of the active site. The Mn(2+) site is built by Asp179, His269, and Glu305.

The protein belongs to the C-glycoside deglycosidase alpha subunit family. In terms of assembly, heterodimer composed of an alpha subunit (CarB2) and a beta subunit (CarC2). A divalent metal cation serves as cofactor.

It carries out the reaction 3''-dehydroorientin = 1,5-anhydro-D-erythro-hex-1-en-3-ulose + luteolin. Its activity is regulated as follows. Activity is strongly reduced in the presence of chelating agents. In terms of biological role, carbon-carbon bond-cleaving enzyme which participates in the metabolism of C-glycosides. Acts on the C8-glycosylated compound 3''-dehydroorientin (3''-oxo-orientin). The polypeptide is C-glycoside deglycosidase alpha subunit (Arthrobacter globiformis (strain ATCC 8010 / DSM 20124 / JCM 1332 / NBRC 12137 / NCIMB 8907 / NRRL B-2979 / 168)).